A 237-amino-acid chain; its full sequence is MEKREELYAGKAKSVYRTDDPERFVLVFRDDTSAFDGEKKEQLNRKGMVNNKFNAFIMEKLEAAGVPTHFEGLLSDTESLVKKLEMIPVECVVRNVSAGSLCRRLGVEEGLELNPPTFELFLKNDALHDPMVNESLAVSFGWAKADELARMKELTYKVNDVLKKLFDDAGMLLVDYKLEFGRSGGQIVLGDEFSPDGCRIWDKETRKKMDKDRFRQGLGEVIETYEEVGRRLGIKFD.

This sequence belongs to the SAICAR synthetase family.

It catalyses the reaction 5-amino-1-(5-phospho-D-ribosyl)imidazole-4-carboxylate + L-aspartate + ATP = (2S)-2-[5-amino-1-(5-phospho-beta-D-ribosyl)imidazole-4-carboxamido]succinate + ADP + phosphate + 2 H(+). Its pathway is purine metabolism; IMP biosynthesis via de novo pathway; 5-amino-1-(5-phospho-D-ribosyl)imidazole-4-carboxamide from 5-amino-1-(5-phospho-D-ribosyl)imidazole-4-carboxylate: step 1/2. The polypeptide is Phosphoribosylaminoimidazole-succinocarboxamide synthase (Marinobacter nauticus (strain ATCC 700491 / DSM 11845 / VT8) (Marinobacter aquaeolei)).